Reading from the N-terminus, the 463-residue chain is Argininosuccinate lyase (463 aa).

It belongs to the lyase 1 family. Argininosuccinate lyase subfamily.

The protein localises to the cytoplasm. It catalyses the reaction 2-(N(omega)-L-arginino)succinate = fumarate + L-arginine. It participates in amino-acid biosynthesis; L-arginine biosynthesis; L-arginine from L-ornithine and carbamoyl phosphate: step 3/3. The protein is Argininosuccinate lyase of Prochlorococcus marinus (strain NATL2A).